We begin with the raw amino-acid sequence, 228 residues long: UPF0056 membrane protein MJ0972 (228 aa).

Transmembrane regions (helical) follow at residues 22 to 42 (FYIY…LIPI), 68 to 88 (VVLL…GITI), 133 to 153 (VPLA…MILI), 163 to 183 (GVVV…LSLT), and 201 to 221 (IMGL…IVGL).

The protein belongs to the UPF0056 (MarC) family.

It localises to the cell membrane. This chain is UPF0056 membrane protein MJ0972, found in Methanocaldococcus jannaschii (strain ATCC 43067 / DSM 2661 / JAL-1 / JCM 10045 / NBRC 100440) (Methanococcus jannaschii).